The following is a 410-amino-acid chain: MKQNYILSIILCYLLANVHSAPAIITVWQTVTDAQVAAGPTAAAPAANANANVQQAAAASAPAPAPVASPAAPAPASSAPQSSTPSSSGWLSNLFNSFFGGSDSDSSSGSDTASAAPASTSPQSSSSSSSSSGNSFLSFLSGLFGSGSSSSTPSSISQQQQQQQGSPASGSNSPNSAQPDAAAASNPVPQSNNNQGSGLGSGFGSGFGSGSGSDSDSGSGLPSASSSTIIQQQPSSSNIGSSSTSSSSSSSSSSSSSSSSSGDIYAAISQCDGIDASFASEILDAHNKYRAQHKVGDLSWDVDTYNYAKNNADNYDCSGVLTHTHGKFGENLAAGFKDGASTVAAWVDEPISYSDASFVYNHFTQVIWKGSTKVGCAYKDCRKSNWGLYVVCEYDPYGNVIGQGSKNVFP.

The N-terminal stretch at 1 to 20 (MKQNYILSIILCYLLANVHS) is a signal peptide. Disordered stretches follow at residues 64–86 (PAPVASPAAPAPASSAPQSSTPS), 102–132 (SDSDSSSGSDTASAAPASTSPQSSSSSSSSS), and 148–260 (SSSS…SSSS). A compositionally biased stretch (low complexity) spans 148-179 (SSSSTPSSISQQQQQQQGSPASGSNSPNSAQP). Residues 197-211 (SGLGSGFGSGFGSGS) are compositionally biased toward gly residues. Positions 212 to 260 (GSDSDSGSGLPSASSSTIIQQQPSSSNIGSSSTSSSSSSSSSSSSSSSS) are enriched in low complexity. One can recognise an SCP domain in the interval 283 to 394 (LDAHNKYRAQ…NWGLYVVCEY (112 aa)).

It belongs to the CRISP family.

The protein localises to the secreted. In terms of biological role, secreted protein that acts as a virulence factor during infections. This Candida albicans (strain SC5314 / ATCC MYA-2876) (Yeast) protein is Secreted protein PRY1 (PRY1).